Here is a 245-residue protein sequence, read N- to C-terminus: 8-amino-3,8-dideoxy-manno-octulosonate cytidylyltransferase (245 aa).

Belongs to the KdsB family.

It localises to the cytoplasm. It catalyses the reaction 8-amino-3,8-dideoxy-alpha-D-manno-octulosonate + CTP = CMP-8-amino-3,8-dideoxy-alpha-D-manno-oct-2-ulosonate + diphosphate. Its pathway is bacterial outer membrane biogenesis; lipopolysaccharide biosynthesis. Functionally, activates KDO8N (a required 8-carbon sugar) for incorporation into bacterial lipopolysaccharide in the Shewanella genus. This chain is 8-amino-3,8-dideoxy-manno-octulosonate cytidylyltransferase, found in Shewanella sp. (strain W3-18-1).